The following is a 239-amino-acid chain: Fatty acid metabolism regulator protein (239 aa).

Residues 6–74 (QSPAGFAEEY…HGKPTKVNNF (69 aa)) form the HTH gntR-type domain. A DNA-binding region (H-T-H motif) is located at residues 34-53 (ERELSELIGVTRTTLREVLQ).

In terms of assembly, homodimer.

The protein localises to the cytoplasm. Multifunctional regulator of fatty acid metabolism. The sequence is that of Fatty acid metabolism regulator protein from Salmonella paratyphi C (strain RKS4594).